The sequence spans 1461 residues: Formin-3 (1461 aa).

Disordered regions lie at residues 1–67 (MASK…SDDN) and 431–457 (YREE…RPTT). Low complexity predominate over residues 12 to 28 (TSRSIQSRNSSYSTSSN). Polar residues-rich tracts occupy residues 29 to 53 (ERIG…STND) and 438 to 457 (PHGN…RPTT). Positions 92-508 (SETEQLRKIY…KIQKSMQLLT (417 aa)) constitute a GBD/FH3 domain. The tract at residues 137-515 (QHTVLDEATY…LLTHTLEALE (379 aa)) is interaction with tea4. Residues 540–639 (GTAEEIAEYK…VQNSNEQHLQ (100 aa)) are a coiled coil. The tract at residues 683 to 811 (GIPVRVHTPS…EPKIDETSLT (129 aa)) is disordered. A compositionally biased stretch (low complexity) spans 700 to 718 (SFSGSEISSSPSPLLPDVS). The span at 731 to 784 (SPPPPPPAVIVPTPAPAPIPVPPPAPIMGGPPPPPPPPGVAGAGPPPPPPPPPA) shows a compositional bias: pro residues. Basic and acidic residues predominate over residues 801 to 811 (PEPKIDETSLT). One can recognise an FH2 domain in the interval 845 to 1257 (LRDLHKPTRP…RIMSEDRDKL (413 aa)). Disordered regions lie at residues 1268–1337 (AKYR…AEEK) and 1416–1461 (ERLQ…RQKQ). 2 stretches are compositionally biased toward basic and acidic residues: residues 1273-1315 (KREL…KTGD) and 1325-1337 (MEDL…AEEK). The span at 1445–1454 (TNGSNASNLV) shows a compositional bias: polar residues.

This sequence belongs to the formin homology family. In terms of assembly, interacts with rax2, rho3 and tea4. Interacts with tea1 in the presence of tea4.

The protein localises to the cytoplasm. Its subcellular location is the cell cortex. It is found in the cell tip. Involved in controlling polarized cell growth. Required for interphase actin cable formation and microtubule organization. This Schizosaccharomyces pombe (strain 972 / ATCC 24843) (Fission yeast) protein is Formin-3 (for3).